Here is an 83-residue protein sequence, read N- to C-terminus: Small ribosomal subunit protein eS21 (83 aa).

Methionine 1 carries the post-translational modification N-acetylmethionine. Residue lysine 41 forms a Glycyl lysine isopeptide (Lys-Gly) (interchain with G-Cter in SUMO2) linkage.

The protein belongs to the eukaryotic ribosomal protein eS21 family. Component of the 40S small ribosomal subunit.

Its subcellular location is the cytoplasm. It is found in the cytosol. It localises to the rough endoplasmic reticulum. Functionally, component of the small ribosomal subunit. The ribosome is a large ribonucleoprotein complex responsible for the synthesis of proteins in the cell. This is Small ribosomal subunit protein eS21 (RPS21) from Oryctolagus cuniculus (Rabbit).